Reading from the N-terminus, the 147-residue chain is D-aminoacyl-tRNA deacylase (147 aa).

Positions 136–137 match the Gly-cisPro motif, important for rejection of L-amino acids motif; the sequence is GP.

The protein belongs to the DTD family. In terms of assembly, homodimer.

Its subcellular location is the cytoplasm. It carries out the reaction glycyl-tRNA(Ala) + H2O = tRNA(Ala) + glycine + H(+). It catalyses the reaction a D-aminoacyl-tRNA + H2O = a tRNA + a D-alpha-amino acid + H(+). Functionally, an aminoacyl-tRNA editing enzyme that deacylates mischarged D-aminoacyl-tRNAs. Also deacylates mischarged glycyl-tRNA(Ala), protecting cells against glycine mischarging by AlaRS. Acts via tRNA-based rather than protein-based catalysis; rejects L-amino acids rather than detecting D-amino acids in the active site. By recycling D-aminoacyl-tRNA to D-amino acids and free tRNA molecules, this enzyme counteracts the toxicity associated with the formation of D-aminoacyl-tRNA entities in vivo and helps enforce protein L-homochirality. The chain is D-aminoacyl-tRNA deacylase from Sulfurihydrogenibium sp. (strain YO3AOP1).